The primary structure comprises 173 residues: RNA pyrophosphohydrolase (173 aa).

Positions 11-164 constitute a Nudix hydrolase domain; it reads PYRRCVGVVV…KKHVYRKVVS (154 aa). The Nudix box motif lies at 52–73; sequence GGIDEGEEPLDAACRELYEETG.

The protein belongs to the Nudix hydrolase family. RppH subfamily. It depends on a divalent metal cation as a cofactor.

Functionally, accelerates the degradation of transcripts by removing pyrophosphate from the 5'-end of triphosphorylated RNA, leading to a more labile monophosphorylated state that can stimulate subsequent ribonuclease cleavage. The protein is RNA pyrophosphohydrolase of Bartonella quintana (strain Toulouse) (Rochalimaea quintana).